Here is an 886-residue protein sequence, read N- to C-terminus: 3',5'-cyclic-AMP phosphodiesterase 4A (886 aa).

The segment at 1 to 128 (MEPPTVPSER…GRSPLDSQAS (128 aa)) is disordered. Ser13 is subject to Phosphoserine. Residues 36–46 (QPRTPIRIQQR) are compositionally biased toward low complexity. A compositionally biased stretch (basic and acidic residues) spans 51–78 (SAERAERERQPHRPIERADAMDTSDRPG). Gly residues predominate over residues 93–104 (TGTGSGGAGGGS). Gly119 and Leu123 each carry phosphoserine. Position 152 is a phosphoserine; by MAPKAPK2 (Ser152). Residues Ser157, Ser165, and Ser209 each carry the phosphoserine modification. Residues 294–331 (KQNEVEIPSPTMKEREKQQAPRPRPSQPPPPPVPHLQP) form a disordered region. Positions 315-328 (RPRPSQPPPPPVPH) are enriched in pro residues. A Phosphoserine modification is found at Ser346. A PDEase domain is found at 357–686 (VKTDQEELLA…DWYYSAIRQS (330 aa)). Lys358 participates in a covalent cross-link: Glycyl lysine isopeptide (Lys-Gly) (interchain with G-Cter in SUMO). The Proton donor role is filled by His433. His433 provides a ligand contact to 3',5'-cyclic AMP. AMP is bound by residues His433 and His437. Residues His437, His473, Asp474, and Asp591 each contribute to the Zn(2+) site. AMP is bound by residues Asp474, Asp591, Gln642, and Phe645. Asp474 lines the Mg(2+) pocket. Asp474 contributes to the Mn(2+) binding site. 3',5'-cyclic AMP-binding residues include Gln642 and Phe645. Disordered regions lie at residues 682 to 705 (AIRQ…PLPD) and 866 to 886 (FGED…GDPT). 2 positions are modified to phosphoserine: Ser686 and Ser688. The span at 876–886 (PGGGGSGGDPT) shows a compositional bias: gly residues.

It belongs to the cyclic nucleotide phosphodiesterase family. PDE4 subfamily. Interacts with LYN (via SH3 domain). Interacts with ARRB2. It depends on Zn(2+) as a cofactor. Mg(2+) is required as a cofactor. Requires Mn(2+) as cofactor. In terms of processing, proteolytically cleaved by CASP3. Phosphorylated at Ser-119 by PKA. Expressed in lymphoid cell subsets including CD8-positive T cells and T-helper 2 cells. Expressed in dendritic cells. In terms of tissue distribution, highly expressed in liver, stomach, testis, thyroid and adrenal glands and at a lower extent in placenta, kidney, pancreas, ovary, uterus and skin. Expressed in myeloid cell subsets including dendritic cells, monocytes, macrophages, eosinophils and mast cells. Expressed in natural killer cells. Expressed in bronchial smooth muscle. As to expression, expressed at high levels in the heart and small intestine. It is also found in the brain, kidney, spleen, colon, salivary gland, ovary and peripheral blood lymphocytes. Expressed predominantly in skeletal muscle and brain and at lower levels in the testis. Found in specific neuronal subpopulations including cortical pyramidal neurons, horn neurons in the spinal cord and Purkinje cells in cerebellum (at protein level).

The protein localises to the cytoplasm. It is found in the perinuclear region. The protein resides in the cell projection. Its subcellular location is the ruffle membrane. It localises to the cytosol. The protein localises to the membrane. The enzyme catalyses 3',5'-cyclic AMP + H2O = AMP + H(+). It participates in purine metabolism; 3',5'-cyclic AMP degradation; AMP from 3',5'-cyclic AMP: step 1/1. Its activity is regulated as follows. Inhibited by rolipram, cilomilast, Ro 20-1724, roflumilast and denbufylline. Inhibited by rolipram. With respect to regulation, inhibited by rolipram and cilomilast. Hydrolyzes the second messenger 3',5'-cyclic AMP (cAMP), which is a key regulator of many important physiological processes. In terms of biological role, efficiently hydrolyzes cAMP. Functionally, efficiently hydrolyzes cAMP. The phosphodiesterase activity is not affected by calcium, calmodulin or cyclic GMP (cGMP) levels. Does not hydrolyze cGMP. The polypeptide is 3',5'-cyclic-AMP phosphodiesterase 4A (PDE4A) (Homo sapiens (Human)).